The chain runs to 247 residues: Small ribosomal subunit protein eS6 (247 aa).

The segment at 194 to 247 (ALKKKRVTKKREDHAEYTKLLAQRMKEAKERKMERKRSNSRSKGDSIRESTSKK) is disordered. Basic and acidic residues predominate over residues 217–247 (RMKEAKERKMERKRSNSRSKGDSIRESTSKK).

Belongs to the eukaryotic ribosomal protein eS6 family. In terms of processing, ribosomal protein S6 is the major substrate of protein kinases in eukaryote ribosomes.

Functionally, component of the 40S small ribosomal subunit. Plays an important role in controlling cell growth and proliferation through the selective translation of particular classes of mRNA. The sequence is that of Small ribosomal subunit protein eS6 (RPS6) from Aplysia californica (California sea hare).